The sequence spans 134 residues: Profilin-3 (134 aa).

Cys-13 and Cys-118 are oxidised to a cystine. The Involved in PIP2 interaction signature appears at Ala-84–Thr-100. Phosphothreonine is present on Thr-114.

The protein belongs to the profilin family. Occurs in many kinds of cells as a complex with monomeric actin in a 1:1 ratio. In terms of processing, phosphorylated by MAP kinases.

The protein resides in the cytoplasm. The protein localises to the cytoskeleton. Binds to actin and affects the structure of the cytoskeleton. At high concentrations, profilin prevents the polymerization of actin, whereas it enhances it at low concentrations. The protein is Profilin-3 of Olea europaea (Common olive).